A 205-amino-acid polypeptide reads, in one-letter code: Ras-related protein Rab-18-B (205 aa).

Positions 17, 20, 21, 22, 23, 34, 35, 40, 66, 123, 125, and 152 each coordinate GTP. S22 provides a ligand contact to Mg(2+). 2 short sequence motifs (switch) span residues 31–45 and 63–80; these read DTFD…GVDF and DTAG…YYRG. Mg(2+) is bound at residue T40. Residue C198 is the site of S-palmitoyl cysteine attachment. C202 carries the cysteine methyl ester modification. C202 carries S-geranylgeranyl cysteine lipidation. Residues 203–205 constitute a propeptide, removed in mature form; that stretch reads SLV.

Belongs to the small GTPase superfamily. Rab family. Mg(2+) is required as a cofactor.

The protein localises to the endoplasmic reticulum membrane. The protein resides in the golgi apparatus. It localises to the cis-Golgi network membrane. It is found in the lipid droplet. Its subcellular location is the apical cell membrane. The enzyme catalyses GTP + H2O = GDP + phosphate + H(+). Its activity is regulated as follows. Regulated by guanine nucleotide exchange factors (GEFs) which promote the exchange of bound GDP for free GTP. Regulated by GTPase activating proteins (GAPs) which increase the GTP hydrolysis activity at the ER membrane. Inhibited by GDP dissociation inhibitors (GDIs) which prevent Rab-GDP dissociation. Its function is as follows. The small GTPases Rab are key regulators of intracellular membrane trafficking, from the formation of transport vesicles to their fusion with membranes. Rabs cycle between an inactive GDP-bound form and an active GTP-bound form that is able to recruit to membranes different sets of downstream effectors directly responsible for vesicle formation, movement, tethering and fusion. Required for the localization of ZFYVE1 to lipid droplets and for its function in mediating the formation of endoplasmic reticulum-lipid droplets (ER-LD) contacts. Also required for maintaining endoplasmic reticulum structure. Plays a role in apical endocytosis/recycling. Plays a key role in eye and brain development and neurodegeneration. The polypeptide is Ras-related protein Rab-18-B (rab18b) (Danio rerio (Zebrafish)).